We begin with the raw amino-acid sequence, 262 residues long: Malonyl-[acyl-carrier protein] O-methyltransferase (262 aa).

The protein belongs to the methyltransferase superfamily.

It carries out the reaction malonyl-[ACP] + S-adenosyl-L-methionine = malonyl-[ACP] methyl ester + S-adenosyl-L-homocysteine. It functions in the pathway cofactor biosynthesis; biotin biosynthesis. Its function is as follows. Converts the free carboxyl group of a malonyl-thioester to its methyl ester by transfer of a methyl group from S-adenosyl-L-methionine (SAM). It allows to synthesize pimeloyl-ACP via the fatty acid synthetic pathway. This is Malonyl-[acyl-carrier protein] O-methyltransferase from Dechloromonas aromatica (strain RCB).